A 289-amino-acid polypeptide reads, in one-letter code: Orotidine 5'-phosphate decarboxylase (289 aa).

Lys97 acts as the Proton donor in catalysis.

It belongs to the OMP decarboxylase family. Type 2 subfamily.

The enzyme catalyses orotidine 5'-phosphate + H(+) = UMP + CO2. It functions in the pathway pyrimidine metabolism; UMP biosynthesis via de novo pathway; UMP from orotate: step 2/2. In Petrotoga mobilis (strain DSM 10674 / SJ95), this protein is Orotidine 5'-phosphate decarboxylase.